The primary structure comprises 428 residues: MQRDYIDAGYSPKDTDLICEFHIEPSAGVNFEEAATHMAGESSIDSWTEIATLSPELAARLKPHVFYMDEDAQTVRVAYSEELFELGSVPQVLSAVAGNILSMKIVDNLRLQDIAFPKSMLREFKGPGFGLSGIRELTGVQDRPLIGTIVKPKVGLTSEKHAEVAYNSFAGGCDLVKDDENLTDQKFNKFEKRAELTLKLAEKAESETGERKMYLCNITAPTCKEMIRRMNILKDLGASYAMIDIVPAGWTALQTLREEADDAGLALHAHRCMHSAYTRNPRHGISMLVVAKLCRLIGLDQLHIGTVVGKMHGEKHEVLSLRDECVLDNVPADESQHVLAQDWGGLKPMFPVASGGLAPTMIPDLYTIFGRDVIMQFGGGIHAHPMGTKAGAAACRQALEASLEGVSLQEYAKNHRELEAAINKWLKK.

The active-site Proton acceptor is the K151. K153 serves as a coordination point for substrate. Positions 177, 179, and 180 each coordinate Mg(2+). K177 carries the post-translational modification N6-carboxylysine. H270 functions as the Proton acceptor in the catalytic mechanism. Residues R271, H303, 354-356 (SGG), and 376-379 (QFGG) each bind substrate.

It belongs to the RuBisCO large chain family. Type III subfamily. Homodimer or homodecamer. In contrast to form I RuBisCO, the form III RuBisCO is composed solely of large subunits. Mg(2+) serves as cofactor.

It catalyses the reaction 2 (2R)-3-phosphoglycerate + 2 H(+) = D-ribulose 1,5-bisphosphate + CO2 + H2O. It carries out the reaction D-ribulose 1,5-bisphosphate + O2 = 2-phosphoglycolate + (2R)-3-phosphoglycerate + 2 H(+). Its function is as follows. Catalyzes the addition of molecular CO(2) and H(2)O to ribulose 1,5-bisphosphate (RuBP), generating two molecules of 3-phosphoglycerate (3-PGA). Functions in an archaeal AMP degradation pathway, together with AMP phosphorylase and R15P isomerase. The polypeptide is Ribulose bisphosphate carboxylase (Methanosarcina barkeri (strain Fusaro / DSM 804)).